The following is a 227-amino-acid chain: Mitochondrial cardiolipin hydrolase (227 aa).

The Mitochondrial intermembrane portion of the chain corresponds to 1–14; the sequence is MDVFKQMSFKELMK. A helical membrane pass occupies residues 15-33; it reads VLGLGTVAFVLGVEWLNWL. The Cytoplasmic segment spans residues 34 to 227; sequence TRRLRDSRGP…LQSKNGQIKK (194 aa). The PLD phosphodiesterase domain maps to 153 to 180; sequence SAVHMHHKFALVDGRKLISGSLNWTLTA. Residues His-158, Lys-160, and Asp-165 contribute to the active site.

This sequence belongs to the phospholipase D family. MitoPLD/Zucchini subfamily. As to quaternary structure, homodimer.

It localises to the mitochondrion outer membrane. The enzyme catalyses a cardiolipin + H2O = a 1,2-diacyl-sn-glycero-3-phospho-(1'-sn-glycerol) + a 1,2-diacyl-sn-glycero-3-phosphate + H(+). Its function is as follows. Presents phospholipase and nuclease activities, depending on the different physiological conditions. Plays a key role in mitochondrial fusion and fission via its phospholipase activity. In its phospholipase role, it uses the mitochondrial lipid cardiolipin as substrate to generate phosphatidate (PA or 1,2-diacyl-sn-glycero-3-phosphate), a second messenger signaling lipid. Production of PA facilitates Mitofusin-mediated fusion, whereas the cleavage of PA by the Lipin family of phosphatases produces diacylgycerol (DAG) which promotes mitochondrial fission. Regulates mitochondrial shape through facilitating mitochondrial fusion. During spermatogenesis, plays a critical role in PIWI-interacting RNA (piRNA) biogenesis. piRNAs provide essential protection against the activity of mobile genetic elements. piRNA-mediated transposon silencing is thus critical for maintaining genome stability, in particular in germline cells when transposons are mobilized as a consequence of wide-spread genomic demethylation. Has been shown to be a backbone-non-specific, single strand-specific nuclease, cleaving either RNA or DNA substrates with similar affinity. Produces 5' phosphate and 3' hydroxyl termini, suggesting it could directly participate in the processing of primary piRNA transcripts. Has been proposed to act as a cardiolipin hydrolase to generate phosphatidic acid at mitochondrial surface. Although it cannot be excluded that it can act as a phospholipase in some circumstances, this activity could not be confirmed. This chain is Mitochondrial cardiolipin hydrolase (pld6), found in Danio rerio (Zebrafish).